The following is an 89-amino-acid chain: Small ribosomal subunit protein uS15 (89 aa).

This sequence belongs to the universal ribosomal protein uS15 family. As to quaternary structure, part of the 30S ribosomal subunit. Forms a bridge to the 50S subunit in the 70S ribosome, contacting the 23S rRNA.

One of the primary rRNA binding proteins, it binds directly to 16S rRNA where it helps nucleate assembly of the platform of the 30S subunit by binding and bridging several RNA helices of the 16S rRNA. Its function is as follows. Forms an intersubunit bridge (bridge B4) with the 23S rRNA of the 50S subunit in the ribosome. This is Small ribosomal subunit protein uS15 from Treponema denticola (strain ATCC 35405 / DSM 14222 / CIP 103919 / JCM 8153 / KCTC 15104).